We begin with the raw amino-acid sequence, 528 residues long: 4-chlorobenzoate--CoA ligase (528 aa).

ATP-binding positions include T161 to K169, N300 to T305, and N409.

This sequence belongs to the ATP-dependent AMP-binding enzyme family. As to quaternary structure, homodimer. Mg(2+) is required as a cofactor.

The catalysed reaction is 4-chlorobenzoate + ATP + CoA = 4-chlorobenzoyl-CoA + AMP + diphosphate. It participates in xenobiotic degradation; 4-chlorobenzoate degradation; 4-hydroxybenzoate from 4-chlorobenzoate: step 2/3. With respect to regulation, unaffected by 5,5'-dithiobis-(2-nitrobenzoic acid), 4-chloromercuribenzoate and sodium azide. Inhibited by Cu(2+), Fe(2+) and Zn(2+). Unaffected by Na(+), K(+) and Li(+). Its function is as follows. Catalyzes the formation of chlorobenzoyl-CoA via a 2 step reaction. First 4-chlorobenzoyl is adenylated by ATP, followed by acyl transfer from the 4-chlorobenzoyl-AMP intermediate to CoA. Benzoate, 4-bromobenzoate, 4-iodobenzoate and 4-methylbenzoate also act as substrates. Inactive towards 4-aminobenzoate, 4-hydroxybenzoate, 2-aminobenzoate, 2,3-dihydroxybenzoate, 4-coumarate and the aliphatic carboxylic acids palmate, caproate, laurate and butyrate. Negligible activity is detected when ATP is replaced by UTP, CTP or GTP as cosubstrate. This chain is 4-chlorobenzoate--CoA ligase, found in Pseudomonas sp. (strain CBS-3).